Consider the following 157-residue polypeptide: SsrA-binding protein (157 aa).

The protein belongs to the SmpB family.

The protein localises to the cytoplasm. Required for rescue of stalled ribosomes mediated by trans-translation. Binds to transfer-messenger RNA (tmRNA), required for stable association of tmRNA with ribosomes. tmRNA and SmpB together mimic tRNA shape, replacing the anticodon stem-loop with SmpB. tmRNA is encoded by the ssrA gene; the 2 termini fold to resemble tRNA(Ala) and it encodes a 'tag peptide', a short internal open reading frame. During trans-translation Ala-aminoacylated tmRNA acts like a tRNA, entering the A-site of stalled ribosomes, displacing the stalled mRNA. The ribosome then switches to translate the ORF on the tmRNA; the nascent peptide is terminated with the 'tag peptide' encoded by the tmRNA and targeted for degradation. The ribosome is freed to recommence translation, which seems to be the essential function of trans-translation. This chain is SsrA-binding protein, found in Limosilactobacillus reuteri (strain DSM 20016) (Lactobacillus reuteri).